The following is a 229-amino-acid chain: MAGGIKAWPEDERPREKLLRRGAPVLSDAELLALIIRTGDSVTGRSAIDLGRALLQECGDLRTLAGATVSELCAVKGMGTAKATSIKAALEMASRINSERLMICSERFTSPEQVYNHYHYAFRDRRKEYFMALLLDGKNRIMREIQVSEGSLNQSIVHPREVFNPAVRESAAAVILVHNHPTGDPAPSREDLEITRRLREAGDIMGIRVLDHIIIGDGRFTSFVSAGLL.

The 123-residue stretch at 107-229 (RFTSPEQVYN…FTSFVSAGLL (123 aa)) folds into the MPN domain. Residues His-178, His-180, and Asp-191 each contribute to the Zn(2+) site. Positions 178–191 (HNHPTGDPAPSRED) match the JAMM motif motif.

Belongs to the UPF0758 family.

The polypeptide is UPF0758 protein GSU0386 (Geobacter sulfurreducens (strain ATCC 51573 / DSM 12127 / PCA)).